Reading from the N-terminus, the 1541-residue chain is ATP-binding cassette sub-family C member 2 (1541 aa).

At 1 to 26 the chain is on the extracellular side; it reads MDKFCNSTFWDLSLLESPEADLPLCF. Asparagine 6 carries an N-linked (GlcNAc...) asparagine glycan. The helical transmembrane segment at 27–47 threads the bilayer; it reads EQTVLVWIPLGFLWLLAPWQL. Residues 48–67 are Cytoplasmic-facing; the sequence is YSVYRSRTKRSSITKFYLAK. A helical transmembrane segment spans residues 68–88; the sequence is QVFVVFLLILAAIDLSLALTE. The Extracellular segment spans residues 89–92; the sequence is DTGQ. A helical transmembrane segment spans residues 93–113; it reads ATVPPVRYTNPILYLCTWLLV. The Cytoplasmic portion of the chain corresponds to 114 to 125; it reads LAVQHSRQWCVR. A helical transmembrane segment spans residues 126–146; sequence KNSWFLSLFWILSVLCGVFQF. The Extracellular portion of the chain corresponds to 147 to 164; that stretch reads QTLIRALLKDSKSNMAYS. Residues 165-185 traverse the membrane as a helical segment; that stretch reads YLFFVSYGFQIVLLILTAFSG. Residues 186–309 are Cytoplasmic-facing; it reads PSDSTQTPSV…DYPKSWLIKS (124 aa). 2 positions are modified to phosphoserine: serine 279 and serine 281. A helical membrane pass occupies residues 310–330; the sequence is LFKTFHVVILKSFILKLIHDL. The 284-residue stretch at 318–601 folds into the ABC transmembrane type-1 1 domain; that stretch reads ILKSFILKLI…LPMVTSSILQ (284 aa). At 331–356 the chain is on the extracellular side; sequence LVFLNPQLLKLLIGFVKSSNSYVWFG. The helical transmembrane segment at 357–377 threads the bilayer; it reads YICAILMFAVTLIQSFCLQSY. Topologically, residues 378 to 433 are cytoplasmic; sequence FQHCFVLGMCVRTTVMSSIYKKALTLSNLARKQYTIGETVNLMSVDSQKLMDATNY. Residues 434–454 traverse the membrane as a helical segment; the sequence is MQLVWSSVIQITLSIFFLWRE. The Extracellular portion of the chain corresponds to 455–457; sequence LGP. Residues 458–478 form a helical membrane-spanning segment; sequence SILAGVGVMVLLIPVNGVLAT. The Cytoplasmic segment spans residues 479 to 540; the sequence is KIRNIQVQNM…NLLRFGQLQS (62 aa). A helical membrane pass occupies residues 541–561; sequence LLIFILQITPILVSVVTFSVY. Residues 562–583 lie on the Extracellular side of the membrane; it reads VLVDSANVLNAEKAFTSITLFN. A helical transmembrane segment spans residues 584–604; sequence ILRFPLSMLPMVTSSILQASV. Topologically, residues 605-967 are cytoplasmic; sequence SVDRLERYLG…VKFSIYLKYL (363 aa). The ABC transporter 1 domain maps to 633–857; sequence VKFSEASFTW…KGVFARNWKT (225 aa). 667–674 is an ATP binding site; the sequence is GTVGSGKS. 2 disordered regions span residues 862–881 and 901–923; these read SGPEGEATVNNDSEAEDDDD and RENSLRRTLSRSSRSSSRRGKSL. A Phosphoserine modification is found at serine 874. Residues 906–915 show a composition bias toward low complexity; the sequence is RRTLSRSSRS. A phosphoserine mark is found at serine 922 and serine 926. The chain crosses the membrane as a helical span at residues 968–988; the sequence is QAVGWWSILFIILFYGLNNVA. One can recognise an ABC transmembrane type-1 2 domain in the interval 975–1260; it reads ILFIILFYGL…LVRMTSEAET (286 aa). Topologically, residues 989 to 1029 are extracellular; that stretch reads FIGSNLWLSAWTSDSDNLNGTNNSSSHRDMRIGVFGALGLA. N-linked (GlcNAc...) asparagine glycans are attached at residues asparagine 1007, asparagine 1010, and asparagine 1011. The chain crosses the membrane as a helical span at residues 1030-1050; it reads QGICLLISTLWSIYACRNASK. Topologically, residues 1051–1093 are cytoplasmic; sequence ALHGQLLTNILRAPMRFFDTTPTGRIVNRFSGDISTVDDLLPQ. The chain crosses the membrane as a helical span at residues 1094 to 1114; that stretch reads TLRSWMMCFFGIAGTLVMICM. Residue alanine 1115 is a topological domain, extracellular. The chain crosses the membrane as a helical span at residues 1116–1136; that stretch reads TPVFAIIIIPLSILYISVQVF. Topologically, residues 1137–1207 are cytoplasmic; the sequence is YVATSRQLRR…TSNRWLAIRL (71 aa). The helical transmembrane segment at 1208–1228 threads the bilayer; it reads ELVGNLVVFCSALLLVIYRKT. Residues 1229–1230 lie on the Extracellular side of the membrane; that stretch reads LT. Residues 1231-1251 traverse the membrane as a helical segment; the sequence is GDVVGFVLSNALNITQTLNWL. Residues 1252 to 1541 lie on the Cytoplasmic side of the membrane; that stretch reads VRMTSEAETN…GIENVNHTEL (290 aa). An ABC transporter 2 domain is found at 1296 to 1530; it reads IQFNNYQVRY…RGSFYLMAKE (235 aa). 1330–1337 is a binding site for ATP; sequence GRTGAGKS. The residue at position 1434 (serine 1434) is a Phosphoserine.

The protein belongs to the ABC transporter superfamily. ABCC family. Conjugate transporter (TC 3.A.1.208) subfamily. Mainly expressed in the liver.

The protein localises to the apical cell membrane. The catalysed reaction is an S-substituted glutathione(in) + ATP + H2O = an S-substituted glutathione(out) + ADP + phosphate + H(+). The enzyme catalyses taurolithocholate 3-sulfate(in) + ATP + H2O = taurolithocholate 3-sulfate(out) + ADP + phosphate + H(+). It catalyses the reaction ATP + H2O + xenobioticSide 1 = ADP + phosphate + xenobioticSide 2.. It carries out the reaction 17beta-estradiol 17-O-(beta-D-glucuronate)(in) + ATP + H2O = 17beta-estradiol 17-O-(beta-D-glucuronate)(out) + ADP + phosphate + H(+). The catalysed reaction is leukotriene C4(in) + ATP + H2O = leukotriene C4(out) + ADP + phosphate + H(+). The enzyme catalyses (4Z,15Z)-bilirubin IXalpha C8-beta-D-glucuronoside(in) + ATP + H2O = (4Z,15Z)-bilirubin IXalpha C8-beta-D-glucuronoside(out) + ADP + phosphate + H(+). It catalyses the reaction (4Z,15Z)-bilirubin IXalpha C8,C12-beta-D-bisglucuronoside(in) + ATP + H2O = (4Z,15Z)-bilirubin IXalpha C8,C12-beta-D-bisglucuronoside(out) + ADP + phosphate + H(+). In terms of biological role, ATP-dependent transporter of the ATP-binding cassette (ABC) family that binds and hydrolyzes ATP to enable active transport of various substrates including many drugs, toxicants and endogenous compound across cell membranes. Transports a wide variety of conjugated organic anions such as sulfate-, glucuronide- and glutathione (GSH)-conjugates of endo- and xenobiotics substrates. Mediates hepatobiliary excretion of mono- and bis-glucuronidated bilirubin molecules and therefore play an important role in bilirubin detoxification. Also mediates hepatobiliary excretion of others glucuronide conjugates such as 17beta-estradiol 17-glucosiduronic acid and leukotriene C4. Transports sulfated bile salt such as taurolithocholate sulfate. Transports various anticancer drugs, such as anthracycline, vinca alkaloid and methotrexate and HIV-drugs such as protease inhibitors. This is ATP-binding cassette sub-family C member 2 from Rattus norvegicus (Rat).